The chain runs to 422 residues: O-methyltransferase kk1A (422 aa).

Residue Asp277 participates in S-adenosyl-L-methionine binding. His320 acts as the Proton acceptor in catalysis.

Belongs to the class I-like SAM-binding methyltransferase superfamily. Cation-independent O-methyltransferase family.

The protein operates within secondary metabolite biosynthesis. In terms of biological role, O-methyltransferase; part of the gene cluster that mediates the biosynthesis of KK-1, a novel cyclic depsipeptide with 10 residues which is a promising active compound with high activity against many plant pathogens, especially Botrytis cinerea. Within the pathway, kk1A is responsible for the O-methylation of tyrosine as a free amino acid before its activation as an aminoacyl-AMP by the corresponding A domain of kk1B. The nonribosomal peptide synthetase (NRPS) kk1B catalyzes the elongation and cyclization of the decapeptide chain composed of 1 D-lactic acid residue (D-Lac), 1 pipecolic acid residue (Pip), 1 aspartic acid residue (Asp), 1 isoleucine residue (Ile), 1 glycine residue (Gly), 1 tyrosine residue (Tyr) and 4 valine residues (Val). The Asp, Ile and 3 Val residues are N-methylated by the 5 methyltransferase domains from the NRPS (found in modules 3, 5, 6, 7 and 9), whereas the Tyr residue is O-methylated by the cluster encoded O-methyltransferase kk1A. The thioesterase kk1J is likely to be involved in the corrective mechanism of peptide chain synthesis. The D-lactate dehydrogenase kk1H is involved in the synthesis of D-lactic acid from pyruvic acid, which is recognized by the A domain of the first kk1B module. The pyrroline-5-carboxylate reductase kk1I is involved in the synthesis of the L-pipecolic acid residue of KK-1 from delta-1-pyrroline-5-carboxylate (P5C), a metabolic intermediate of lysine. It is still unclear how kk1C and kk1D are involved in the production of KK-1. The polypeptide is O-methyltransferase kk1A (Curvularia clavata).